The primary structure comprises 428 residues: Dihydroorotase (428 aa).

Residues His-60 and His-62 each contribute to the Zn(2+) site. Substrate is bound by residues His-62 to Arg-64 and Asn-94. Asp-152, His-179, and His-232 together coordinate Zn(2+). Substrate is bound at residue Asn-278. A Zn(2+)-binding site is contributed by Asp-305. Asp-305 is an active-site residue. Substrate is bound by residues His-309 and Phe-323 to Gly-324.

This sequence belongs to the metallo-dependent hydrolases superfamily. DHOase family. Class I DHOase subfamily. Zn(2+) serves as cofactor.

The catalysed reaction is (S)-dihydroorotate + H2O = N-carbamoyl-L-aspartate + H(+). It participates in pyrimidine metabolism; UMP biosynthesis via de novo pathway; (S)-dihydroorotate from bicarbonate: step 3/3. Functionally, catalyzes the reversible cyclization of carbamoyl aspartate to dihydroorotate. This is Dihydroorotase from Anoxybacillus flavithermus (strain DSM 21510 / WK1).